The chain runs to 517 residues: Argininosuccinate lyase, chloroplastic (517 aa).

Residues 1-45 constitute a chloroplast transit peptide; that stretch reads MGAIDLSFSQSLLFSSSRSNLSSSTHRSVSFLPPGSKSRCLPPLR. Positions 79, 166, and 211 each coordinate 2-(N(omega)-L-arginino)succinate. His212 acts as the Proton acceptor in catalysis. Ser333 serves as the catalytic Proton donor. Residues Asn341, Tyr373, Gln378, and Lys381 each contribute to the 2-(N(omega)-L-arginino)succinate site.

Belongs to the lyase 1 family. Argininosuccinate lyase subfamily.

It is found in the plastid. It localises to the chloroplast. The catalysed reaction is 2-(N(omega)-L-arginino)succinate = fumarate + L-arginine. It participates in amino-acid biosynthesis; L-arginine biosynthesis; L-arginine from L-ornithine and carbamoyl phosphate: step 3/3. The protein is Argininosuccinate lyase, chloroplastic of Arabidopsis thaliana (Mouse-ear cress).